A 593-amino-acid chain; its full sequence is Serine/threonine-protein kinase SSN3 (593 aa).

Residues 90 to 489 (YEIIGYIAAG…AIDALDHVYF (400 aa)) form the Protein kinase domain. 96 to 104 (IAAGTYGKV) provides a ligand contact to ATP. A disordered region spans residues 161–199 (KPSHKRFTPPNNSNSTQIRSNSGSETNVRINSSSITNNS). The segment covering 169–185 (PPNNSNSTQIRSNSGSE) has biased composition (polar residues). Low complexity predominate over residues 186-199 (TNVRINSSSITNNS). An ATP-binding site is contributed by Lys211. The active-site Proton acceptor is Asp312. Disordered regions lie at residues 517–551 (DNDI…NMNG) and 569–593 (AAVS…KKRK). Residues 518–536 (NDITNVGNDNNQANHSQKQ) show a composition bias toward polar residues. Positions 540 to 551 (GNNNNKNGNMNG) are enriched in low complexity. Positions 573–585 (GNGNNPTSNTATG) are enriched in polar residues.

Belongs to the protein kinase superfamily. CMGC Ser/Thr protein kinase family. CDC2/CDKX subfamily. As to quaternary structure, component of the SRB8-11 complex, a regulatory module of the Mediator complex. It depends on Mg(2+) as a cofactor.

It is found in the nucleus. It carries out the reaction L-seryl-[protein] + ATP = O-phospho-L-seryl-[protein] + ADP + H(+). The catalysed reaction is L-threonyl-[protein] + ATP = O-phospho-L-threonyl-[protein] + ADP + H(+). It catalyses the reaction [DNA-directed RNA polymerase] + ATP = phospho-[DNA-directed RNA polymerase] + ADP + H(+). Its function is as follows. Component of the SRB8-11 complex. The SRB8-11 complex is a regulatory module of the Mediator complex which is itself involved in regulation of basal and activated RNA polymerase II-dependent transcription. The SRB8-11 complex may be involved in the transcriptional repression of a subset of genes regulated by Mediator. It may inhibit the association of the Mediator complex with RNA polymerase II to form the holoenzyme complex. The SRB8-11 complex phosphorylates the C-terminal domain (CTD) of the largest subunit of RNA polymerase II. This Kluyveromyces lactis (strain ATCC 8585 / CBS 2359 / DSM 70799 / NBRC 1267 / NRRL Y-1140 / WM37) (Yeast) protein is Serine/threonine-protein kinase SSN3 (SSN3).